A 393-amino-acid polypeptide reads, in one-letter code: Ribonuclease D (393 aa).

The 3'-5' exonuclease domain occupies 14-181 (LITTTEDLTG…VYQLLLERLE (168 aa)). The 82-residue stretch at 219–300 (NRRMLGVLRA…AAARALPDGA (82 aa)) folds into the HRDC domain.

This sequence belongs to the RNase D family. A divalent metal cation serves as cofactor.

It is found in the cytoplasm. It catalyses the reaction Exonucleolytic cleavage that removes extra residues from the 3'-terminus of tRNA to produce 5'-mononucleotides.. Exonuclease involved in the 3' processing of various precursor tRNAs. Initiates hydrolysis at the 3'-terminus of an RNA molecule and releases 5'-mononucleotides. The protein is Ribonuclease D of Gluconacetobacter diazotrophicus (strain ATCC 49037 / DSM 5601 / CCUG 37298 / CIP 103539 / LMG 7603 / PAl5).